The primary structure comprises 270 residues: Glucosamine-6-phosphate deaminase (270 aa).

The active-site Proton acceptor; for enolization step is Asp-72. Asp-141 acts as the For ring-opening step in catalysis. His-143 functions as the Proton acceptor; for ring-opening step in the catalytic mechanism. Catalysis depends on Glu-148, which acts as the For ring-opening step.

This sequence belongs to the glucosamine/galactosamine-6-phosphate isomerase family. NagB subfamily. In terms of assembly, homohexamer.

It carries out the reaction alpha-D-glucosamine 6-phosphate + H2O = beta-D-fructose 6-phosphate + NH4(+). Its pathway is amino-sugar metabolism; N-acetylneuraminate degradation; D-fructose 6-phosphate from N-acetylneuraminate: step 5/5. Its activity is regulated as follows. Allosterically activated by N-acetylglucosamine 6-phosphate (GlcNAc6P). Functionally, catalyzes the reversible isomerization-deamination of glucosamine 6-phosphate (GlcN6P) to form fructose 6-phosphate (Fru6P) and ammonium ion. This chain is Glucosamine-6-phosphate deaminase, found in Haemophilus influenzae (strain 86-028NP).